We begin with the raw amino-acid sequence, 201 residues long: FMN-dependent NADH:quinone oxidoreductase (201 aa).

FMN contacts are provided by residues Ser10, 16 to 18 (SQS), 96 to 99 (MYNF), and 140 to 143 (SRGG).

This sequence belongs to the azoreductase type 1 family. Homodimer. FMN is required as a cofactor.

The enzyme catalyses 2 a quinone + NADH + H(+) = 2 a 1,4-benzosemiquinone + NAD(+). It catalyses the reaction N,N-dimethyl-1,4-phenylenediamine + anthranilate + 2 NAD(+) = 2-(4-dimethylaminophenyl)diazenylbenzoate + 2 NADH + 2 H(+). Functionally, quinone reductase that provides resistance to thiol-specific stress caused by electrophilic quinones. Also exhibits azoreductase activity. Catalyzes the reductive cleavage of the azo bond in aromatic azo compounds to the corresponding amines. The chain is FMN-dependent NADH:quinone oxidoreductase from Salmonella choleraesuis (strain SC-B67).